The sequence spans 493 residues: Putative MgpC-like protein MPN_414 (493 aa).

Residues 1-14 (MKPTSLPKNFTNNP) show a composition bias toward polar residues. Disordered stretches follow at residues 1 to 92 (MKPT…GHNS) and 441 to 493 (KSAR…SGNH). 2 stretches are compositionally biased toward basic and acidic residues: residues 25–34 (DNGRAYRKLN) and 44–56 (DSTK…DKDG). Composition is skewed to polar residues over residues 72–92 (VSST…GHNS) and 445–472 (ENAQ…SPCR). Over residues 482-493 (RVTEEERSSGNH) the composition is skewed to basic and acidic residues.

Belongs to the MgpC family.

The sequence is that of Putative MgpC-like protein MPN_414 from Mycoplasma pneumoniae (strain ATCC 29342 / M129 / Subtype 1) (Mycoplasmoides pneumoniae).